The primary structure comprises 490 residues: Cobyric acid synthase (490 aa).

A GATase cobBQ-type domain is found at 251 to 444 (GLTIAVIHLP…LHGIFANDAF (194 aa)). The active-site Nucleophile is the C329. The active site involves H436.

It belongs to the CobB/CobQ family. CobQ subfamily.

Its pathway is cofactor biosynthesis; adenosylcobalamin biosynthesis. Its function is as follows. Catalyzes amidations at positions B, D, E, and G on adenosylcobyrinic A,C-diamide. NH(2) groups are provided by glutamine, and one molecule of ATP is hydrogenolyzed for each amidation. In Roseiflexus castenholzii (strain DSM 13941 / HLO8), this protein is Cobyric acid synthase.